An 88-amino-acid polypeptide reads, in one-letter code: Large ribosomal subunit protein eL37 (88 aa).

Zn(2+) contacts are provided by cysteine 19, cysteine 22, cysteine 34, and cysteine 37. A C4-type zinc finger spans residues 19 to 37; it reads CNRCGKRSFHVQKKTCASC.

This sequence belongs to the eukaryotic ribosomal protein eL37 family. Zn(2+) serves as cofactor.

Its function is as follows. Binds to the 23S rRNA. This chain is Large ribosomal subunit protein eL37 (RPL37), found in Debaryomyces hansenii (strain ATCC 36239 / CBS 767 / BCRC 21394 / JCM 1990 / NBRC 0083 / IGC 2968) (Yeast).